The sequence spans 2715 residues: Histone-lysine N-methyltransferase 2B (2715 aa).

Over residues 1-11 (MAAAAGGGSCP) the composition is skewed to gly residues. Disordered stretches follow at residues 1 to 65 (MAAA…GEDT), 81 to 302 (RRLW…GGLP), 320 to 518 (SLGL…PKST), and 532 to 771 (VSAR…QMPP). Position 2 is an N-acetylalanine (alanine 2). The span at 12–24 (GPGSARGRFPGRP) shows a compositional bias: low complexity. The short motif at 17–36 (RGRFPGRPRGAGGGGGRGGR) is the Menin-binding motif (MBM) element. 2 stretches are compositionally biased toward gly residues: residues 25–38 (RGAG…GRGN) and 49–60 (RGGGATGPGGAE). The a.T hook 1 DNA-binding region spans 37 to 44 (GNGAERVR). Over residues 109 to 123 (PEEESSDGESDEEEF) the composition is skewed to acidic residues. A DNA-binding region (a.T hook 2) is located at residues 110–117 (EEESSDGE). Serine 113, serine 114, and serine 118 each carry phosphoserine. A compositionally biased stretch (basic residues) spans 144-158 (QRGRAPRGRGRKHKT). Positions 160 to 176 (PLPPPRLADVAPTPPKT) are enriched in pro residues. The span at 199 to 208 (RAQAPQAPRS) shows a compositional bias: low complexity. Phosphoserine is present on serine 351. A DNA-binding region (a.T hook 3) is located at residues 357–365 (QEQKLDDEE). A compositionally biased stretch (acidic residues) spans 361-374 (LDDEEEEKKEEEEK). Basic and acidic residues predominate over residues 375-387 (DKEGEEKEERAVA). Residues 401-449 (LPPPPLTPPAPSPPPPLPPPSTSPPPPLCPPPPPPVSPPPLPSPPPPPA) are compositionally biased toward pro residues. The span at 545 to 556 (RFMDEDPPKPPK) shows a compositional bias: basic and acidic residues. Pro residues predominate over residues 568–596 (TTSPPVPQEPAPVPSPPRAPTPPSTPVPL). The segment covering 597–608 (PEKRRSILREPT) has biased composition (basic and acidic residues). The segment covering 618 to 637 (LPPPPPAPPPPPAPSPPPAP) has biased composition (pro residues). Low complexity predominate over residues 731–751 (PQTQAQLLQPLQALQTQLLPQ). Pro residues predominate over residues 752-769 (ALPPPQPQLQPPPSPQQM). A Glycyl lysine isopeptide (Lys-Gly) (interchain with G-Cter in SUMO2) cross-link involves residue lysine 805. Disordered stretches follow at residues 819 to 868 (PLSP…GPRI) and 894 to 959 (SALP…HHGK). 3 positions are modified to phosphoserine: serine 821, serine 844, and serine 861. Residues 836–857 (ISDRGPVRSEDESVEAKRERPS) are compositionally biased toward basic and acidic residues. The segment covering 907–917 (EDTSSASETES) has biased composition (low complexity). Position 936 is a phosphoserine (serine 936). A compositionally biased stretch (basic residues) spans 948–959 (TPRRSLPSHHGK). The segment at 959–1006 (KKMRMARCGHCRGCLRVQDCGSCVNCLDKPKFGGPNTKKQCCVYRKCD) adopts a CXXC-type zinc-finger fold. 8 residues coordinate Zn(2+): cysteine 966, cysteine 969, cysteine 972, cysteine 978, cysteine 981, cysteine 984, cysteine 1000, and cysteine 1005. The tract at residues 1027–1132 (LLPWDSDESP…RPRKPTLQPV (106 aa)) is disordered. 4 positions are modified to phosphoserine: serine 1032, serine 1035, serine 1092, and serine 1095. A Glycyl lysine isopeptide (Lys-Gly) (interchain with G-Cter in SUMO2) cross-link involves residue lysine 1136. Residues 1146–1166 (LAPGPFASFPNGWTGKQKSPD) are disordered. PHD-type zinc fingers lie at residues 1201 to 1252 (PMVC…CKFC), 1249 to 1303 (CKFC…CVRC), and 1335 to 1396 (GNYC…CAGA). Residues 1404 to 1504 (ALSGALQGGL…GLLLKLLESA (101 aa)) form the Bromo domain. The tract at residues 1545 to 1567 (QQEPETPESGQPPGDPSAAFQGK) is disordered. A C2HC pre-PHD-type zinc finger spans residues 1578–1618 (PRQCALCLKYGDADSKEAGRLLYIGQNEWTHVNCAIWSAEV). A PHD-type 4 zinc finger spans residues 1639–1686 (MRCELCLKPGATVGCCLSSCLSNFHFMCARASYCIFQDDKKVFCQKHT). One can recognise an FYR N-terminal domain in the interval 1727-1783 (AINVLIGSIRIDSLGTLSDLSDCEGRLFPIGYQCSRLYWSTVDARRRCWYRCRILEY). Disordered regions lie at residues 1806–1978 (HSPA…PDFE), 2008–2093 (VAAG…VVRA), 2118–2162 (LKNL…PTRT), and 2280–2412 (RVST…RTGP). Low complexity predominate over residues 1876 to 1894 (PLGGVSFGPLPSPGSPSSL). Serine 1930 and serine 1936 each carry phosphoserine. Residues 1960–1972 (PPGPAPSPPPPED) are compositionally biased toward pro residues. Acidic residues predominate over residues 2062-2072 (DGVDDGTDSEA). Phosphothreonine occurs at positions 2068 and 2083. A compositionally biased stretch (polar residues) spans 2144 to 2153 (NGSQPSQGLT). Phosphoserine is present on residues serine 2288 and serine 2348. A compositionally biased stretch (low complexity) spans 2342–2351 (EPAGEESPGP). The segment covering 2359 to 2373 (LPLPEDGPPQVPDGP) has biased composition (pro residues). The 82-residue stretch at 2411-2492 (GPHLRFEISS…QRCQHYKFRY (82 aa)) folds into the FYR C-terminal domain. The WDR5 interaction motif (WIN) motif lies at 2508–2513 (GAARAE). Positions 2575–2691 (EAVGVYRSAI…RGEELTYDYK (117 aa)) constitute an SET domain. Residues histidine 2585, arginine 2587, tyrosine 2629, and 2652–2653 (NH) each bind S-adenosyl-L-methionine. Zn(2+) contacts are provided by cysteine 2655 and cysteine 2703. Residues 2699 to 2715 (NKLPCNCGAKRCRRFLN) form the Post-SET domain. Asparagine 2704 lines the S-adenosyl-L-methionine pocket. 2 residues coordinate Zn(2+): cysteine 2705 and cysteine 2710.

The protein belongs to the class V-like SAM-binding methyltransferase superfamily. Histone-lysine methyltransferase family. TRX/MLL subfamily. As to quaternary structure, component of the menin-associated histone methyltransferase complex, at least composed of KMT2B/MLL4, ASH2L, RBBP5, WDR5, DPY30, MEN1; the complex interacts with POLR2A and POLR2B via MEN1. Interacts with NFE2. Interacts with KDM6B. Interacts (via WIN motif) with WDR5. Interacts (via MBM motif) with MEN1. Forms a core complex with the evolutionary conserved subcomplex WRAD composed of WDR5, RBBP5, ASH2L/ASH2 and DPY30 subunits; WRAD differentially stimulates the methyltransferase activity. In terms of tissue distribution, widely expressed. Highest levels in testis. Also found in brain with higher expression in the cerebellum than in any other region, bone marrow, heart, muscle, kidney, placenta, spleen, thymus, prostate, ovary, intestine, colon, peripheral blood lymphocytes and pancreas. Often amplified in pancreatic carcinomas.

Its subcellular location is the nucleus. The enzyme catalyses L-lysyl(4)-[histone H3] + S-adenosyl-L-methionine = N(6)-methyl-L-lysyl(4)-[histone H3] + S-adenosyl-L-homocysteine + H(+). It carries out the reaction N(6)-methyl-L-lysyl(4)-[histone H3] + S-adenosyl-L-methionine = N(6),N(6)-dimethyl-L-lysyl(4)-[histone H3] + S-adenosyl-L-homocysteine + H(+). Histone methyltransferase that catalyzes methyl group transfer from S-adenosyl-L-methionine to the epsilon-amino group of 'Lys-4' of histone H3 (H3K4) via a non-processive mechanism. Part of chromatin remodeling machinery predominantly forms H3K4me1 and H3K4me2 methylation marks at active chromatin sites where transcription and DNA repair take place. Likely plays a redundant role with KMT2C in enriching H3K4me1 marks on primed and active enhancer elements. Plays a central role in beta-globin locus transcription regulation by being recruited by NFE2. Plays an important role in controlling bulk H3K4me during oocyte growth and preimplantation development. Required during the transcriptionally active period of oocyte growth for the establishment and/or maintenance of bulk H3K4 trimethylation (H3K4me3), global transcriptional silencing that preceeds resumption of meiosis, oocyte survival and normal zygotic genome activation. The polypeptide is Histone-lysine N-methyltransferase 2B (KMT2B) (Homo sapiens (Human)).